The following is a 319-amino-acid chain: Putative antiporter CaxA (319 aa).

10 consecutive transmembrane segments (helical) span residues 3–23 (VATI…DRFV), 38–58 (MIIG…MVSA), 81–101 (ILLV…SMTI), 105–125 (FPLL…QSLT), 127–147 (AEGA…VYWG), 175–195 (VWLV…VHGA), 208–228 (LIGL…ASLI), 250–270 (ILAV…AAAA), 275–292 (YVMM…LRLG), and 297–317 (INRV…YLLF).

This sequence belongs to the Ca(2+):cation antiporter (CaCA) (TC 2.A.19) family.

The protein localises to the cell membrane. Functionally, confers modest Ca(2+) and Na(+) resistance. This chain is Putative antiporter CaxA (caxA), found in Alkalimonas amylolytica.